We begin with the raw amino-acid sequence, 127 residues long: Methylglyoxal synthase (127 aa).

In terms of domain architecture, MGS-like spans 1–127 (MEGQRCIALI…ENLIDFNSAD (127 aa)). Substrate is bound by residues His-12, Lys-16, 38-41 (TGTT), and 59-60 (SG). Asp-65 (proton donor/acceptor) is an active-site residue. A substrate-binding site is contributed by His-92.

This sequence belongs to the methylglyoxal synthase family.

The enzyme catalyses dihydroxyacetone phosphate = methylglyoxal + phosphate. Catalyzes the formation of methylglyoxal from dihydroxyacetone phosphate. This chain is Methylglyoxal synthase, found in Agrobacterium fabrum (strain C58 / ATCC 33970) (Agrobacterium tumefaciens (strain C58)).